Consider the following 396-residue polypeptide: Phosphoglycerate kinase (396 aa).

Substrate-binding positions include 21–23 (DFN), Arg36, 59–62 (HLGR), Arg118, and Arg151. Residues Lys201, Gly292, Glu323, and 349 to 352 (GGDS) contribute to the ATP site.

It belongs to the phosphoglycerate kinase family. In terms of assembly, monomer.

The protein resides in the cytoplasm. The catalysed reaction is (2R)-3-phosphoglycerate + ATP = (2R)-3-phospho-glyceroyl phosphate + ADP. It functions in the pathway carbohydrate degradation; glycolysis; pyruvate from D-glyceraldehyde 3-phosphate: step 2/5. The sequence is that of Phosphoglycerate kinase from Leptospira biflexa serovar Patoc (strain Patoc 1 / Ames).